The sequence spans 189 residues: MyoD family inhibitor domain-containing protein 2 (189 aa).

Residues 28 to 188 (KEDTQLTNAK…LAMEISEICY (161 aa)) enclose the MDFI domain.

The protein belongs to the MDFI family.

The chain is MyoD family inhibitor domain-containing protein 2 from Homo sapiens (Human).